A 263-amino-acid chain; its full sequence is Shikimate dehydrogenase (NADP(+)) (263 aa).

Shikimate contacts are provided by residues 16-18 and Thr65; that span reads SKS. Lys69 acts as the Proton acceptor in catalysis. The shikimate site is built by Asn90 and Asp105. NADP(+) contacts are provided by residues 125–129 and Leu208; that span reads GSGGS. Shikimate is bound at residue Tyr210. Gly230 is an NADP(+) binding site.

Belongs to the shikimate dehydrogenase family. In terms of assembly, homodimer.

The enzyme catalyses shikimate + NADP(+) = 3-dehydroshikimate + NADPH + H(+). It functions in the pathway metabolic intermediate biosynthesis; chorismate biosynthesis; chorismate from D-erythrose 4-phosphate and phosphoenolpyruvate: step 4/7. With respect to regulation, inhibited by curcumin, 3-(2-naphthyloxy)-4-oxo-2-(trifluoromethyl)-4H-chromen-7-yl 3-chlorobenzoate, butyl 2-{[3-(2-naphthyloxy)-4-oxo-2-(trifluoromethyl)-4H-chromen-7-yl]oxy}propanoate, 2-({2-[(2-{[2-(2,3-dimethylanilino)-2-oxoethyl]sulfanyl}-1,3-benzothiazol-6-yl)amino]-2-oxoethyl}sulfanyl)-N-(2-naphthyl)acetamide, and maesaquinone diacetate. Involved in the biosynthesis of the chorismate, which leads to the biosynthesis of aromatic amino acids. Catalyzes the reversible NADPH linked reduction of 3-dehydroshikimate (DHSA) to yield shikimate (SA). It can also use NAD to oxidize shikimate. In Helicobacter pylori (Campylobacter pylori), this protein is Shikimate dehydrogenase (NADP(+)).